Consider the following 570-residue polypeptide: Sulfite reductase [NADPH] hemoprotein beta-component (570 aa).

[4Fe-4S] cluster-binding residues include cysteine 434, cysteine 440, cysteine 479, and cysteine 483. Residue cysteine 483 participates in siroheme binding.

The protein belongs to the nitrite and sulfite reductase 4Fe-4S domain family. In terms of assembly, alpha(8)-beta(8). The alpha component is a flavoprotein, the beta component is a hemoprotein. The cofactor is siroheme. [4Fe-4S] cluster serves as cofactor.

It catalyses the reaction hydrogen sulfide + 3 NADP(+) + 3 H2O = sulfite + 3 NADPH + 4 H(+). It participates in sulfur metabolism; hydrogen sulfide biosynthesis; hydrogen sulfide from sulfite (NADPH route): step 1/1. In terms of biological role, component of the sulfite reductase complex that catalyzes the 6-electron reduction of sulfite to sulfide. This is one of several activities required for the biosynthesis of L-cysteine from sulfate. In Salmonella newport (strain SL254), this protein is Sulfite reductase [NADPH] hemoprotein beta-component.